A 221-amino-acid chain; its full sequence is Probable septum site-determining protein MinC (221 aa).

Belongs to the MinC family. As to quaternary structure, interacts with MinD and FtsZ.

Its function is as follows. Cell division inhibitor that blocks the formation of polar Z ring septums. Rapidly oscillates between the poles of the cell to destabilize FtsZ filaments that have formed before they mature into polar Z rings. Prevents FtsZ polymerization. The sequence is that of Probable septum site-determining protein MinC from Aliivibrio salmonicida (strain LFI1238) (Vibrio salmonicida (strain LFI1238)).